The primary structure comprises 360 residues: Complement control protein homolog (360 aa).

The N-terminal stretch at 1–20 is a signal peptide; the sequence is MYTLHYICLVLSCVIYFVWT. 4 Sushi domains span residues 21 to 81, 82 to 144, 145 to 207, and 208 to 266; these read LSCP…KCQK, KKCS…ICDI, KKCK…KCEF, and IFCK…ECMK. Intrachain disulfides connect Cys-23–Cys-68, Cys-54–Cys-79, Cys-84–Cys-125, Cys-111–Cys-142, Cys-147–Cys-191, Cys-175–Cys-205, Cys-210–Cys-252, and Cys-238–Cys-264. N-linked (GlcNAc...) asparagine; by host glycans are attached at residues Asn-36, Asn-39, Asn-46, and Asn-72. Asn-155 is a glycosylation site (N-linked (GlcNAc...) asparagine; by host). N-linked (GlcNAc...) asparagine; by host glycosylation is present at Asn-294. A helical membrane pass occupies residues 328–350; that stretch reads GVLVIILTTSFIIIGIILTGVCL.

Belongs to the receptors of complement activation (RCA) family.

The protein resides in the membrane. Its subcellular location is the secreted. The sequence is that of Complement control protein homolog (4) from Saimiriine herpesvirus 2 (strain 11) (SaHV-2).